We begin with the raw amino-acid sequence, 390 residues long: Serpin B4 (390 aa).

Met-1 is subject to N-acetylmethionine.

Belongs to the serpin family. Ov-serpin subfamily. Squamous cells.

Its subcellular location is the cytoplasm. Functionally, may act as a protease inhibitor to modulate the host immune response against tumor cells. The sequence is that of Serpin B4 (SERPINB4) from Homo sapiens (Human).